We begin with the raw amino-acid sequence, 183 residues long: Extracellular superoxide dismutase [Cu-Zn] (183 aa).

The N-terminal stretch at 1–32 (MTMLQQILLISVIIGTVHVHEVDCANEVLKAR) is a signal peptide. Asn-63 carries N-linked (GlcNAc...) asparagine glycosylation. Cu cation-binding residues include His-77, His-79, and His-94. A disulfide bridge links Cys-88 with Cys-177. The Zn(2+) site is built by His-94, His-102, His-111, and Asp-114. His-151 is a Cu cation binding site.

Belongs to the Cu-Zn superoxide dismutase family. Requires Cu cation as cofactor. It depends on Zn(2+) as a cofactor.

It is found in the secreted. Its subcellular location is the extracellular space. It carries out the reaction 2 superoxide + 2 H(+) = H2O2 + O2. Its function is as follows. Destroys radicals which are normally produced within the cells and which are toxic to biological systems. The chain is Extracellular superoxide dismutase [Cu-Zn] (SOD) from Haemonchus contortus (Barber pole worm).